We begin with the raw amino-acid sequence, 245 residues long: Pyridoxine 5'-phosphate synthase (245 aa).

Asn-7 contributes to the 3-amino-2-oxopropyl phosphate binding site. 9 to 10 contacts 1-deoxy-D-xylulose 5-phosphate; it reads DH. 3-amino-2-oxopropyl phosphate is bound at residue Arg-18. Residue His-43 is the Proton acceptor of the active site. Residues Arg-45 and His-50 each contribute to the 1-deoxy-D-xylulose 5-phosphate site. Catalysis depends on Glu-70, which acts as the Proton acceptor. 1-deoxy-D-xylulose 5-phosphate is bound at residue Thr-100. The active-site Proton donor is the His-190. 3-amino-2-oxopropyl phosphate contacts are provided by residues Gly-191 and 212 to 213; that span reads GH.

The protein belongs to the PNP synthase family. As to quaternary structure, homooctamer; tetramer of dimers.

The protein localises to the cytoplasm. It catalyses the reaction 3-amino-2-oxopropyl phosphate + 1-deoxy-D-xylulose 5-phosphate = pyridoxine 5'-phosphate + phosphate + 2 H2O + H(+). Its pathway is cofactor biosynthesis; pyridoxine 5'-phosphate biosynthesis; pyridoxine 5'-phosphate from D-erythrose 4-phosphate: step 5/5. In terms of biological role, catalyzes the complicated ring closure reaction between the two acyclic compounds 1-deoxy-D-xylulose-5-phosphate (DXP) and 3-amino-2-oxopropyl phosphate (1-amino-acetone-3-phosphate or AAP) to form pyridoxine 5'-phosphate (PNP) and inorganic phosphate. The polypeptide is Pyridoxine 5'-phosphate synthase (Prochlorococcus marinus (strain MIT 9313)).